The primary structure comprises 77 residues: Putative regulatory protein tsl2331 (77 aa).

It belongs to the RemA family.

The protein is Putative regulatory protein tsl2331 of Thermosynechococcus vestitus (strain NIES-2133 / IAM M-273 / BP-1).